The sequence spans 798 residues: Integrin beta-1 (798 aa).

Residues 1 to 20 (MNLQLIFWIGLISSVCYVFG) form the signal peptide. At 21 to 728 (QADENRCLKA…ETPECPTGPD (708 aa)) the chain is on the extracellular side. Residues 26–76 (RCLKANAKSCGECIQAGPNCGWCTNSTFLQEGMPTSARCDDLEALRKKGCH) enclose the PSI domain. 28 disulfides stabilise this stretch: Cys-27-Cys-45, Cys-35-Cys-464, Cys-38-Cys-64, Cys-48-Cys-75, Cys-207-Cys-213, Cys-261-Cys-301, Cys-401-Cys-415, Cys-435-Cys-462, Cys-466-Cys-486, Cys-477-Cys-489, Cys-491-Cys-500, Cys-502-Cys-533, Cys-516-Cys-531, Cys-525-Cys-536, Cys-538-Cys-553, Cys-555-Cys-576, Cys-560-Cys-574, Cys-568-Cys-579, Cys-581-Cys-590, Cys-592-Cys-615, Cys-599-Cys-613, Cys-607-Cys-618, Cys-620-Cys-630, Cys-633-Cys-636, Cys-640-Cys-691, Cys-646-Cys-665, Cys-649-Cys-661, and Cys-699-Cys-723. Asn-50 carries N-linked (GlcNAc...) asparagine glycosylation. The segment covering 75 to 84 (CHPDDIENPR) has biased composition (basic and acidic residues). The disordered stretch occupies residues 75 to 107 (CHPDDIENPRGSKNIKKNKNVTNRSKGTAEKLQ). Asn-94 and Asn-97 each carry an N-linked (GlcNAc...) asparagine glycan. The VWFA domain maps to 140 to 378 (DYPIDLYYLM…QLIIDAYNSL (239 aa)). Ser-152 and Ser-154 together coordinate Mg(2+). Ser-154, Asp-157, Asp-158, and Glu-189 together coordinate Ca(2+). The interval 207 to 213 (CTSEQNC) is CX3CL1-binding. Residue Asn-212 is glycosylated (N-linked (GlcNAc...) asparagine). Residues Asn-244, Asp-246, Pro-248, and Glu-249 each coordinate Ca(2+). Residue Glu-249 participates in Mg(2+) binding. The N-linked (GlcNAc...) asparagine glycan is linked to Asn-269. The CX3CL1-binding stretch occupies residues 295 to 314 (LPNDGHCHLENDVYTMSHYY). A Ca(2+)-binding site is contributed by Ala-362. Residues Asn-363, Asn-406, and Asn-417 are each glycosylated (N-linked (GlcNAc...) asparagine). Positions 383-465 (ILENSKLPEG…IILQFICECE (83 aa)) are interaction with TMEM182. I-EGF domains follow at residues 466–501 (CQSEGIPSSPKCHDGNGTFECGACRCNEGRVGRHCE), 502–554 (CSTD…KFCE), 555–591 (CDNFNCDRSNGLICGGNGVCKCRVCECNPNYTGSACD), and 592–631 (CSLDTTSCMAVNGQICNGRGVCECGVCKCTDPKFQGPTCE). An N-linked (GlcNAc...) asparagine glycan is attached at Asn-481. A glycan (N-linked (GlcNAc...) asparagine) is linked at Asn-520. Asn-584 carries N-linked (GlcNAc...) asparagine glycosylation. Asn-669 carries an N-linked (GlcNAc...) asparagine glycan. The chain crosses the membrane as a helical span at residues 729 to 749 (IIPIVAGVVAGIVLIGLALLL). The Cytoplasmic portion of the chain corresponds to 750 to 798 (IWKLLMIIHDRREFAKFEKEKMNAKWDTGENPIYKSAVTTVVNPKYEGK). A signal for sorting from recycling endosomes; interaction with ACAP1 region spans residues 762–767 (EFAKFE). At Thr-777 the chain carries Phosphothreonine. Tyr-783 is subject to Phosphotyrosine. Ser-785 bears the Phosphoserine mark. Residues 785 to 792 (SAVTTVVN) are interaction with ITGB1BP1. Thr-789 carries the post-translational modification Phosphothreonine. Lys-794 carries the post-translational modification N6-acetyllysine; alternate. Lys-794 is covalently cross-linked (Glycyl lysine isopeptide (Lys-Gly) (interchain with G-Cter in SUMO1); alternate).

The protein belongs to the integrin beta chain family. In terms of assembly, interacts with seprase FAP (seprase); the interaction occurs at the cell surface of invadopodia membrane in a collagen-dependent manner. Heterodimer of an alpha and a beta subunit. Beta-1 associates with either alpha-1, alpha-2, alpha-3, alpha-4, alpha-5, alpha-6, alpha-7, alpha-8, alpha-9, alpha-10, alpha-11 or alpha-V. ITGA6:ITGB1 is found in a complex with CD9; interaction takes place in oocytes and is involved in sperm-egg fusion. Binds LGALS3BP and NMRK2, when associated with alpha-7, but not with alpha-5. Interacts with FLNA, FLNB, FLNC and RANBP9. Interacts with KRT1 in the presence of RACK1 and SRC. Interacts with JAML; integrin alpha-4/beta-1 may regulate leukocyte to endothelial cells adhesion by controlling JAML homodimerization. Interacts with RAB21. Interacts (via the cytoplasmic region) with RAB25 (via the hypervariable C-terminal region). Interacts with MYO10. Interacts with ITGB1BP1 (via C-terminal region); the interaction is a prerequisite for focal adhesion disassembly. Interacts with TLN1; the interaction is prevented by competitive binding of ITGB1BP1. Interacts with ACAP1; required for ITGB1 recycling. Interacts with ASAP3. Interacts with FERMT2; the interaction is inhibited in presence of ITGB1BP1. Interacts with DAB2. Interacts with FGR and HCK. Interacts with alpha-7A and alpha-7B in adult skeletal muscle. Interacts with alpha-7B in cardiomyocytes of adult heart. Interacts with EMP2; the interaction may be direct or indirect and ITGB1 has a heterodimer form. ITGA5:ITGB1 interacts with CCN3. ITGA4:ITGB1 is found in a ternary complex with CX3CR1 and CX3CL1. ITGA5:ITGB1 interacts with FBN1. ITGA5:ITGB1 interacts with IL1B. Interacts with MDK. ITGA4:ITGB1 interacts with MDK; this interaction mediates MDK-induced osteoblast cells migration through PXN phosphorylation. ITGA6:ITGB1 interacts with MDK; this interaction mediates MDK-induced neurite-outgrowth. ITGA5:ITGB1 interacts with ACE2. Interacts with TMEM182 and LAMB1. Interacts with tensin TNS3; TNS3 also interacts with PEAK1, thus acting as an adapter molecule to bridge the association of PEAK1 with ITGB1. Interacts with tensin TNS4; the interaction displaces tensin TNS3 from the ITGB1 cytoplasmic tail and promotes ITGB1 stability. Integrin ITGA9:ITGB1 interacts with SPP1/OPN (via N-terminus). Integrin ITGA9:ITGB1 interacts with TNC/TNFN3 (via the 3rd Fibronectin type-III domain). Integrins ITGA4:ITGB1 and ITGA9:ITGB1 interact with SVEP1 (via Sushi domain 21); thereby inhibit Ca(2+) intracellular signaling and as a result repress vasocontraction. ITGA4:ITGB1 and ITGA5:ITGB1 interacts with SELP. Interacts with CD248. ITGA5:ITGB1 interacts with IGFBP1. ITGA4:ITGB1 interacts with BCAM. Interacts with ADGRG6. As to expression, expressed in the spleen, thymus, alveolar macrophages, bone marrow, liver and kidney.

It localises to the cell membrane. Its subcellular location is the cell projection. It is found in the invadopodium membrane. The protein localises to the ruffle membrane. The protein resides in the recycling endosome. It localises to the melanosome. Its subcellular location is the lamellipodium. It is found in the ruffle. The protein localises to the cell junction. The protein resides in the focal adhesion. Functionally, integrins alpha-1/beta-1, alpha-2/beta-1, alpha-10/beta-1 and alpha-11/beta-1 are receptors for collagen. Integrins alpha-1/beta-1 and alpha-2/beta-2 recognize the proline-hydroxylated sequence G-F-P-G-E-R in collagen. Integrins alpha-2/beta-1, alpha-3/beta-1, alpha-4/beta-1, alpha-5/beta-1, alpha-8/beta-1, alpha-10/beta-1, alpha-11/beta-1 and alpha-V/beta-1 are receptors for fibronectin. Alpha-4/beta-1 recognizes one or more domains within the alternatively spliced CS-1 and CS-5 regions of fibronectin. Integrin alpha-5/beta-1 is a receptor for fibrinogen. Integrin alpha-1/beta-1, alpha-2/beta-1, alpha-6/beta-1 and alpha-7/beta-1 are receptors for lamimin. Integrin alpha-6/beta-1 (ITGA6:ITGB1) is present in oocytes and is involved in sperm-egg fusion. Integrin alpha-4/beta-1 is a receptor for VCAM1 and recognizes the sequence Q-I-D-S in VCAM1. Integrin alpha-9/beta-1 is a receptor for VCAM1, cytotactin and osteopontin. It recognizes the sequence A-E-I-D-G-I-E-L in cytotactin. Integrin alpha-3/beta-1 is a receptor for epiligrin, thrombospondin and CSPG4. Integrin alpha-3/beta-1 provides a docking site for FAP (seprase) at invadopodia plasma membranes in a collagen-dependent manner and hence may participate in the adhesion, formation of invadopodia and matrix degradation processes, promoting cell invasion. Alpha-3/beta-1 may mediate with LGALS3 the stimulation by CSPG4 of endothelial cells migration. Integrin alpha-V/beta-1 is a receptor for vitronectin. Beta-1 integrins recognize the sequence R-G-D in a wide array of ligands. When associated with alpha-7/beta-1 integrin, regulates cell adhesion and laminin matrix deposition. Involved in promoting endothelial cell motility and angiogenesis. Involved in osteoblast compaction through the fibronectin fibrillogenesis cell-mediated matrix assembly process and the formation of mineralized bone nodules. May be involved in up-regulation of the activity of kinases such as PKC via binding to KRT1. Together with KRT1 and RACK1, serves as a platform for SRC activation or inactivation. Plays a mechanistic adhesive role during telophase, required for the successful completion of cytokinesis. ITGA4:ITGB1 binds to fractalkine (CX3CL1) and may act as its coreceptor in CX3CR1-dependent fractalkine signaling. ITGA4:ITGB1 and ITGA5:ITGB1 bind to PLA2G2A via a site (site 2) which is distinct from the classical ligand-binding site (site 1) and this induces integrin conformational changes and enhanced ligand binding to site 1. ITGA5:ITGB1 acts as a receptor for fibrillin-1 (FBN1) and mediates R-G-D-dependent cell adhesion to FBN1. ITGA5:ITGB1 acts as a receptor for fibronectin FN1 and mediates R-G-D-dependent cell adhesion to FN1. ITGA5:ITGB1 is a receptor for IL1B and binding is essential for IL1B signaling. ITGA5:ITGB3 is a receptor for soluble CD40LG and is required for CD40/CD40LG signaling. Plays an important role in myoblast differentiation and fusion during skeletal myogenesis. ITGA9:ITGB1 may play a crucial role in SVEP1/polydom-mediated myoblast cell adhesion. Integrins ITGA9:ITGB1 and ITGA4:ITGB1 repress PRKCA-mediated L-type voltage-gated channel Ca(2+) influx and ROCK-mediated calcium sensitivity in vascular smooth muscle cells via their interaction with SVEP1, thereby inhibit vasocontraction. The protein is Integrin beta-1 (ITGB1) of Sus scrofa (Pig).